A 507-amino-acid polypeptide reads, in one-letter code: RNA-binding protein Nova-1 (507 aa).

The tract at residues 1–44 is disordered; the sequence is MMAAAPIQQNGTHTGVPIDLDPPDSRKRPLEAPPEAGSTKRTNT. Residues 27–43 carry the Bipartite nuclear localization signal motif; sequence KRPLEAPPEAGSTKRTN. Residues 49-116 form the KH 1 domain; that stretch reads QYFLKVLIPS…EALNAVHGFI (68 aa). Residues 139–171 form a disordered region; sequence QTTVNPDRIKQTLPSSPTTTKSSPSDPMTTSRA. Low complexity predominate over residues 150–169; it reads TLPSSPTTTKSSPSDPMTTS. Ser-154 carries the phosphoserine modification. 2 consecutive KH domains span residues 171-237 and 421-488; these read ANQV…VELI and KDVV…QYLI. The segment at 419–503 is required for RNA binding; that stretch reads GSKDVVEIAV…YEQGVRAANP (85 aa).

Interacts with PTBP2; the interaction is direct. As to expression, expressed in neurons of the cortex, sub-cortex, cerebellum and brainstem (at protein level). Expressed in motor neurons, but not in glia.

It is found in the nucleus. Functions to regulate alternative splicing in neurons by binding pre-mRNA in a sequence-specific manner to activate exon inclusion or exclusion. It binds specifically to the sequences 5'-YCAY-3' and regulates splicing in only a subset of regulated exons. Binding to an exonic 5'-YCAY-3' cluster changes the protein complexes assembled on pre-mRNA, blocking U1 snRNP binding and exon inclusion, whereas binding to an intronic 5'-YCAY-3' cluster enhances spliceosome assembly and exon inclusion. Binding to 5'-YCAY-3' clusters results in a local and asymmetric action to regulate spliceosome assembly and alternative splicing in neurons. Binding to an exonic 5'-YCAY-3' cluster changed the protein complexes assembled on pre-mRNA, blocking U1 snRNP (small nuclear ribonucleoprotein) binding and exon inclusion, whereas binding to an intronic 5'-YCAY-3' cluster enhanced spliceosome assembly and exon inclusion. With NOVA1, they perform unique biological functions in different brain areas and cell types. Autoregulates its own expression by acting as a splicing repressor. Acts to activate the inclusion of exon E3A in the glycine receptor alpha-2 chain and of exon E9 in gamma-aminobutyric-acid receptor gamma-2 subunit via a distal downstream UCAU-rich intronic splicing enhancer. Acts to regulate a novel glycine receptor alpha-2 chain splice variant (alpha-2N) in developing spinal cord. The protein is RNA-binding protein Nova-1 of Mus musculus (Mouse).